The primary structure comprises 115 residues: MNNIIKQIEQEQMKQDVPAFRPGDSVEVKVWVVEGSKKRLQAFEGVVIAIRNRGLHSAFTVRKISNGEGVERVFQTHSPVIDSIAVKRRGAVRKAKLYYLRERTGKAARIKERLN.

It belongs to the bacterial ribosomal protein bL19 family.

Functionally, this protein is located at the 30S-50S ribosomal subunit interface and may play a role in the structure and function of the aminoacyl-tRNA binding site. The sequence is that of Large ribosomal subunit protein bL19 from Edwardsiella ictaluri (strain 93-146).